The following is a 183-amino-acid chain: Potassium-transporting ATPase KdpC subunit (183 aa).

A helical transmembrane segment spans residues 11-31 (LALLMTLLTGVLYPLAVTGVA).

The protein belongs to the KdpC family. As to quaternary structure, the system is composed of three essential subunits: KdpA, KdpB and KdpC.

It localises to the cell inner membrane. In terms of biological role, part of the high-affinity ATP-driven potassium transport (or Kdp) system, which catalyzes the hydrolysis of ATP coupled with the electrogenic transport of potassium into the cytoplasm. This subunit acts as a catalytic chaperone that increases the ATP-binding affinity of the ATP-hydrolyzing subunit KdpB by the formation of a transient KdpB/KdpC/ATP ternary complex. The chain is Potassium-transporting ATPase KdpC subunit from Pseudomonas putida (strain GB-1).